Here is a 207-residue protein sequence, read N- to C-terminus: CASP-like protein F16 (207 aa).

Residues 1-30 are disordered; it reads MEKSEKGNGVAPATRSPMALMGSSRNENQE. Residues 1–37 lie on the Cytoplasmic side of the membrane; the sequence is MEKSEKGNGVAPATRSPMALMGSSRNENQEVNTSMRT. The chain crosses the membrane as a helical span at residues 38 to 58; sequence AETMLRLVPMALGVAALVVML. Residues 59–79 are Extracellular-facing; the sequence is KNSQSNDFGSVSYSDLGAFRY. Residues 80 to 100 traverse the membrane as a helical segment; sequence LVHANGICAGYSLLSAIIAAV. The Cytoplasmic segment spans residues 101–108; sequence PSPSTMPR. A helical transmembrane segment spans residues 109–129; it reads AWTFFLLDQILTYVILGAAAV. Topologically, residues 130 to 159 are extracellular; the sequence is STEVLYLANKGDSAITWSAACGTFAGFCHK. A helical transmembrane segment spans residues 160–180; sequence ATIAVVITFVAVICYAVLSLV. Residues 181–207 lie on the Cytoplasmic side of the membrane; it reads SSYRLFTKFDAPVNYPSKTIEATVFHG.

It belongs to the Casparian strip membrane proteins (CASP) family. Homodimer and heterodimers.

It is found in the cell membrane. The chain is CASP-like protein F16 (F16) from Gossypium hirsutum (Upland cotton).